Consider the following 200-residue polypeptide: Membrane-spanning 4-domains subfamily A member 5 (200 aa).

Residues 1 to 52 are Cytoplasmic-facing; it reads MDSSTAHSPVFLVFPPEITASEYESTELSATTFSTQSPLQKLFARKMKILGT. The helical transmembrane segment at 53-73 threads the bilayer; the sequence is IQILFGIMTFSFGVIFLFTLL. Residues 74-80 lie on the Extracellular side of the membrane; sequence KPYPRFP. A helical transmembrane segment spans residues 81–101; that stretch reads FIFLSGYPFWGSVLFINSGAF. Residues 102–120 lie on the Cytoplasmic side of the membrane; the sequence is LIAVKRKTTETLIILSRIM. The helical transmembrane segment at 121–141 threads the bilayer; that stretch reads NFLSALGAIAGIILLTFGFIL. Residues 142–159 lie on the Extracellular side of the membrane; it reads DQNYICGYSHQNSQCKAV. A helical transmembrane segment spans residues 160-180; the sequence is TVLFLGILITLMTFSIIELFI. Topologically, residues 181–200 are cytoplasmic; it reads SLPFSILGCHSEDCDCEQCC.

Belongs to the MS4A family. Expressed at high level in the testis. Detected also in the pancreas, heart and in the brain.

It is found in the membrane. Its function is as follows. May be involved in signal transduction as a component of a multimeric receptor complex. This is Membrane-spanning 4-domains subfamily A member 5 (MS4A5) from Homo sapiens (Human).